Here is a 32-residue protein sequence, read N- to C-terminus: MTAISDSQVYVALVSALITSFLAVRLGLALYD.

A helical transmembrane segment spans residues 9 to 31 (VYVALVSALITSFLAVRLGLALY).

This sequence belongs to the PsaM family.

It localises to the plastid. The protein localises to the chloroplast thylakoid membrane. The polypeptide is Photosystem I reaction center subunit XII (Chaetosphaeridium globosum (Charophycean green alga)).